Here is an 84-residue protein sequence, read N- to C-terminus: Cell division topological specificity factor (84 aa).

It belongs to the MinE family.

Prevents the cell division inhibition by proteins MinC and MinD at internal division sites while permitting inhibition at polar sites. This ensures cell division at the proper site by restricting the formation of a division septum at the midpoint of the long axis of the cell. The polypeptide is Cell division topological specificity factor (Burkholderia mallei (strain NCTC 10247)).